The primary structure comprises 546 residues: (+)-epi-alpha-bisabolol synthase (546 aa).

Positions 297, 301, 441, 445, and 449 each coordinate Mg(2+). The DDXXD motif motif lies at 297-301; that stretch reads DDIYD.

The protein belongs to the terpene synthase family. Mg(2+) is required as a cofactor.

The catalysed reaction is (2E,6E)-farnesyl diphosphate + H2O = (+)-epi-alpha-bisabolol + diphosphate. It participates in secondary metabolite biosynthesis; terpenoid biosynthesis. Functionally, sesquiterpene synthase involved in the biosynthesis of (+)-epi-alpha-bisabolol, a precursor of the natural sweetner hernandulcin. This is (+)-epi-alpha-bisabolol synthase from Phyla dulcis (Aztec sweet herb).